The sequence spans 193 residues: MRLCDRDIEIWLDEGRLDIAPRPPIERINGATVDVRLGNQFRVFRGHTAAYIDLSGPKDEVTAALDRVMSDEIQLVEGEAFFLHPGELALAVTLESVTLPDDLVGWLDGRSSLARLGLMVHVTAHRIDPGWQGRIVLEFYNSGKLPLALRPGMLIGALSFEPLSGPAARPYNRREDAKYRNQQGAVASRIDKD.

DCTP is bound by residues 110-115 (RSSLAR), Asp-128, 136-138 (VLE), Tyr-171, Lys-178, and Gln-182. The active-site Proton donor/acceptor is the Glu-138. The segment at 169-193 (RPYNRREDAKYRNQQGAVASRIDKD) is disordered.

This sequence belongs to the dCTP deaminase family. As to quaternary structure, homotrimer.

It carries out the reaction dCTP + H2O + H(+) = dUTP + NH4(+). It participates in pyrimidine metabolism; dUMP biosynthesis; dUMP from dCTP (dUTP route): step 1/2. In terms of biological role, catalyzes the deamination of dCTP to dUTP. The protein is dCTP deaminase of Sodalis glossinidius (strain morsitans).